The primary structure comprises 617 residues: Proline--tRNA ligase (617 aa).

This sequence belongs to the class-II aminoacyl-tRNA synthetase family. ProS type 1 subfamily. As to quaternary structure, homodimer.

It is found in the cytoplasm. The catalysed reaction is tRNA(Pro) + L-proline + ATP = L-prolyl-tRNA(Pro) + AMP + diphosphate. Its function is as follows. Catalyzes the attachment of proline to tRNA(Pro) in a two-step reaction: proline is first activated by ATP to form Pro-AMP and then transferred to the acceptor end of tRNA(Pro). As ProRS can inadvertently accommodate and process non-cognate amino acids such as alanine and cysteine, to avoid such errors it has two additional distinct editing activities against alanine. One activity is designated as 'pretransfer' editing and involves the tRNA(Pro)-independent hydrolysis of activated Ala-AMP. The other activity is designated 'posttransfer' editing and involves deacylation of mischarged Ala-tRNA(Pro). The misacylated Cys-tRNA(Pro) is not edited by ProRS. This chain is Proline--tRNA ligase, found in Streptococcus agalactiae serotype V (strain ATCC BAA-611 / 2603 V/R).